The chain runs to 156 residues: ATP synthase subunit b (156 aa).

A helical membrane pass occupies residues Leu-7–Pro-27.

It belongs to the ATPase B chain family. F-type ATPases have 2 components, F(1) - the catalytic core - and F(0) - the membrane proton channel. F(1) has five subunits: alpha(3), beta(3), gamma(1), delta(1), epsilon(1). F(0) has three main subunits: a(1), b(2) and c(10-14). The alpha and beta chains form an alternating ring which encloses part of the gamma chain. F(1) is attached to F(0) by a central stalk formed by the gamma and epsilon chains, while a peripheral stalk is formed by the delta and b chains.

It is found in the cell inner membrane. Functionally, f(1)F(0) ATP synthase produces ATP from ADP in the presence of a proton or sodium gradient. F-type ATPases consist of two structural domains, F(1) containing the extramembraneous catalytic core and F(0) containing the membrane proton channel, linked together by a central stalk and a peripheral stalk. During catalysis, ATP synthesis in the catalytic domain of F(1) is coupled via a rotary mechanism of the central stalk subunits to proton translocation. In terms of biological role, component of the F(0) channel, it forms part of the peripheral stalk, linking F(1) to F(0). This is ATP synthase subunit b from Shewanella baltica (strain OS185).